We begin with the raw amino-acid sequence, 656 residues long: Chaperone protein DnaK (656 aa).

Thr-204 bears the Phosphothreonine; by autocatalysis mark. The interval 607–656 (VYAKKGGAAGAPPGGEAEGEPQAQAGGKKEDVVDAEFEEVKDEKKKDEDK) is disordered. The span at 620–632 (GGEAEGEPQAQAG) shows a compositional bias: low complexity. A compositionally biased stretch (basic and acidic residues) spans 647-656 (KDEKKKDEDK).

It belongs to the heat shock protein 70 family.

Its function is as follows. Acts as a chaperone. In Coxiella burnetii (strain CbuK_Q154) (Coxiella burnetii (strain Q154)), this protein is Chaperone protein DnaK.